A 335-amino-acid chain; its full sequence is UPF0353 protein MUL_1490 (335 aa).

The next 2 membrane-spanning stretches (helical) occupy residues 18–38 (WFFL…VLQL) and 67–87 (IPAM…AGPT). Positions 98–298 (VVMLVIDVSQ…SVYVSLQQQI (201 aa)) constitute a VWFA domain. A helical membrane pass occupies residues 309–329 (MGWLRLGALVLVAAALAALLI).

The protein belongs to the UPF0353 family.

The protein resides in the cell membrane. The sequence is that of UPF0353 protein MUL_1490 from Mycobacterium ulcerans (strain Agy99).